The primary structure comprises 336 residues: Ornithine carbamoyltransferase, catabolic (336 aa).

Residues 57 to 60, glutamine 84, arginine 108, and 135 to 138 each bind carbamoyl phosphate; these read STRT and HPTQ. Residues asparagine 168, aspartate 232, and 236 to 237 contribute to the L-ornithine site; that span reads SM. Residues 274-275 and arginine 321 each bind carbamoyl phosphate; that span reads CL.

This sequence belongs to the aspartate/ornithine carbamoyltransferase superfamily. OTCase family.

Its subcellular location is the cytoplasm. It carries out the reaction carbamoyl phosphate + L-ornithine = L-citrulline + phosphate + H(+). The protein operates within amino-acid degradation; L-arginine degradation via ADI pathway; carbamoyl phosphate from L-arginine: step 2/2. Its function is as follows. Reversibly catalyzes the transfer of the carbamoyl group from carbamoyl phosphate (CP) to the N(epsilon) atom of ornithine (ORN) to produce L-citrulline. The chain is Ornithine carbamoyltransferase, catabolic from Burkholderia mallei (strain ATCC 23344).